Reading from the N-terminus, the 187-residue chain is Protein P18, mitochondrial (187 aa).

Residues 1-17 (MRRLSSQLMCTAAAVRF) constitute a mitochondrion transit peptide. The segment at 160–187 (NAAKAKADGKEHPSTLAQQQSLFDIKIQ) is disordered.

Its subcellular location is the mitochondrion inner membrane. Functionally, putative RNA-binding protein. This Leishmania tarentolae (Sauroleishmania tarentolae) protein is Protein P18, mitochondrial.